Reading from the N-terminus, the 343-residue chain is Putative dihydroflavonol 4-reductase (343 aa).

Residue Tyr150 coordinates NADP(+).

This sequence belongs to the NAD(P)-dependent epimerase/dehydratase family. Dihydroflavonol-4-reductase subfamily.

It carries out the reaction a (2R,3S,4S)-leucoanthocyanidin + NADP(+) = a (2R,3R)-dihydroflavonol + NADPH + H(+). It functions in the pathway secondary metabolite biosynthesis; flavonoid biosynthesis. The chain is Putative dihydroflavonol 4-reductase (dfrA) from Synechocystis sp. (strain ATCC 27184 / PCC 6803 / Kazusa).